The chain runs to 571 residues: Potassium-transporting ATPase potassium-binding subunit (571 aa).

Transmembrane regions (helical) follow at residues 5-25, 60-80, 86-106, 131-151, 177-197, 247-267, 291-311, 334-354, 386-406, 425-445, 498-518, and 547-567; these read LAAG…YVPV, YGYA…LYAL, VLPL…NTAV, GLAV…VALI, ILLP…VIQS, PTPV…VSLT, LTLL…TLAA, FGIP…TGAV, GLYG…LLVG, ALSV…TVIL, ALGL…LALA, and GTVV…GPIA.

This sequence belongs to the KdpA family. The system is composed of three essential subunits: KdpA, KdpB and KdpC.

The protein localises to the cell membrane. Functionally, part of the high-affinity ATP-driven potassium transport (or Kdp) system, which catalyzes the hydrolysis of ATP coupled with the electrogenic transport of potassium into the cytoplasm. This subunit binds the extracellular potassium ions and delivers the ions to the membrane domain of KdpB through an intramembrane tunnel. The polypeptide is Potassium-transporting ATPase potassium-binding subunit (Rhodococcus jostii (strain RHA1)).